Here is a 259-residue protein sequence, read N- to C-terminus: Dihydroorotate dehydrogenase B (NAD(+)), electron transfer subunit (259 aa).

Residues 2–102 (MQKQNMIVVN…LGPLGHGFPV (101 aa)) enclose the FAD-binding FR-type domain. Residues 53-56 (RPIS), 70-72 (LYR), and 77-78 (GT) each bind FAD. 4 residues coordinate [2Fe-2S] cluster: C221, C226, C229, and C246.

Belongs to the PyrK family. In terms of assembly, heterotetramer of 2 PyrK and 2 PyrD type B subunits. [2Fe-2S] cluster serves as cofactor. Requires FAD as cofactor.

The protein operates within pyrimidine metabolism; UMP biosynthesis via de novo pathway; orotate from (S)-dihydroorotate (NAD(+) route): step 1/1. Its function is as follows. Responsible for channeling the electrons from the oxidation of dihydroorotate from the FMN redox center in the PyrD type B subunit to the ultimate electron acceptor NAD(+). The protein is Dihydroorotate dehydrogenase B (NAD(+)), electron transfer subunit of Bacillus mycoides (strain KBAB4) (Bacillus weihenstephanensis).